Here is a 354-residue protein sequence, read N- to C-terminus: Holliday junction branch migration complex subunit RuvB (354 aa).

Residues 5-197 form a large ATPase domain (RuvB-L) region; it reads TDDFSAADLP…FGIVARLEFY (193 aa). ATP is bound by residues L36, R37, G78, K81, T82, T83, 144-146, R187, Y197, and R234; that span reads EDY. T82 contributes to the Mg(2+) binding site. A small ATPAse domain (RuvB-S) region spans residues 198-268; it reads TAEELGRIVR…IANKALAMLD (71 aa). Residues 271–354 form a head domain (RuvB-H) region; sequence PQGFDVMDRK…PPVSGNDMFT (84 aa). Residues R307, R326, and R331 each coordinate DNA.

The protein belongs to the RuvB family. In terms of assembly, homohexamer. Forms an RuvA(8)-RuvB(12)-Holliday junction (HJ) complex. HJ DNA is sandwiched between 2 RuvA tetramers; dsDNA enters through RuvA and exits via RuvB. An RuvB hexamer assembles on each DNA strand where it exits the tetramer. Each RuvB hexamer is contacted by two RuvA subunits (via domain III) on 2 adjacent RuvB subunits; this complex drives branch migration. In the full resolvosome a probable DNA-RuvA(4)-RuvB(12)-RuvC(2) complex forms which resolves the HJ.

It is found in the cytoplasm. It catalyses the reaction ATP + H2O = ADP + phosphate + H(+). In terms of biological role, the RuvA-RuvB-RuvC complex processes Holliday junction (HJ) DNA during genetic recombination and DNA repair, while the RuvA-RuvB complex plays an important role in the rescue of blocked DNA replication forks via replication fork reversal (RFR). RuvA specifically binds to HJ cruciform DNA, conferring on it an open structure. The RuvB hexamer acts as an ATP-dependent pump, pulling dsDNA into and through the RuvAB complex. RuvB forms 2 homohexamers on either side of HJ DNA bound by 1 or 2 RuvA tetramers; 4 subunits per hexamer contact DNA at a time. Coordinated motions by a converter formed by DNA-disengaged RuvB subunits stimulates ATP hydrolysis and nucleotide exchange. Immobilization of the converter enables RuvB to convert the ATP-contained energy into a lever motion, pulling 2 nucleotides of DNA out of the RuvA tetramer per ATP hydrolyzed, thus driving DNA branch migration. The RuvB motors rotate together with the DNA substrate, which together with the progressing nucleotide cycle form the mechanistic basis for DNA recombination by continuous HJ branch migration. Branch migration allows RuvC to scan DNA until it finds its consensus sequence, where it cleaves and resolves cruciform DNA. The chain is Holliday junction branch migration complex subunit RuvB from Polaromonas sp. (strain JS666 / ATCC BAA-500).